A 207-amino-acid chain; its full sequence is Holliday junction branch migration complex subunit RuvA (207 aa).

Residues 1–63 (MIGMLKGRVE…QDAITLFGFL (63 aa)) form a domain I region. The tract at residues 64-142 (DARSKRMFLQ…VDKIETGEPT (79 aa)) is domain II. The interval 143-153 (STQRIPTDKGV) is flexible linker. The segment at 153–207 (VEQVVEGLMSLGWKQADAQQAVDSVISSSGIALPLEEGNVPTVLRLALTSLDRGR) is domain III.

Belongs to the RuvA family. In terms of assembly, homotetramer. Forms an RuvA(8)-RuvB(12)-Holliday junction (HJ) complex. HJ DNA is sandwiched between 2 RuvA tetramers; dsDNA enters through RuvA and exits via RuvB. An RuvB hexamer assembles on each DNA strand where it exits the tetramer. Each RuvB hexamer is contacted by two RuvA subunits (via domain III) on 2 adjacent RuvB subunits; this complex drives branch migration. In the full resolvosome a probable DNA-RuvA(4)-RuvB(12)-RuvC(2) complex forms which resolves the HJ.

It is found in the cytoplasm. The RuvA-RuvB-RuvC complex processes Holliday junction (HJ) DNA during genetic recombination and DNA repair, while the RuvA-RuvB complex plays an important role in the rescue of blocked DNA replication forks via replication fork reversal (RFR). RuvA specifically binds to HJ cruciform DNA, conferring on it an open structure. The RuvB hexamer acts as an ATP-dependent pump, pulling dsDNA into and through the RuvAB complex. HJ branch migration allows RuvC to scan DNA until it finds its consensus sequence, where it cleaves and resolves the cruciform DNA. The protein is Holliday junction branch migration complex subunit RuvA of Bifidobacterium animalis subsp. lactis (strain AD011).